A 195-amino-acid chain; its full sequence is Iron-sulfur flavoprotein AF_1519 (195 aa).

4 residues coordinate [4Fe-4S] cluster: cysteine 45, cysteine 48, cysteine 51, and cysteine 57.

Belongs to the SsuE family. Isf subfamily. Homodimer. FMN serves as cofactor. Requires [4Fe-4S] cluster as cofactor.

Its function is as follows. Redox-active protein probably involved in electron transport. The protein is Iron-sulfur flavoprotein AF_1519 of Archaeoglobus fulgidus (strain ATCC 49558 / DSM 4304 / JCM 9628 / NBRC 100126 / VC-16).